The sequence spans 326 residues: 4-hydroxythreonine-4-phosphate dehydrogenase (326 aa).

Threonine 132 is a substrate binding site. Histidine 160, histidine 205, and histidine 260 together coordinate a divalent metal cation. Residues lysine 268, asparagine 277, and arginine 286 each contribute to the substrate site.

Belongs to the PdxA family. As to quaternary structure, homodimer. Zn(2+) serves as cofactor. The cofactor is Mg(2+). Co(2+) is required as a cofactor.

Its subcellular location is the cytoplasm. It carries out the reaction 4-(phosphooxy)-L-threonine + NAD(+) = 3-amino-2-oxopropyl phosphate + CO2 + NADH. The protein operates within cofactor biosynthesis; pyridoxine 5'-phosphate biosynthesis; pyridoxine 5'-phosphate from D-erythrose 4-phosphate: step 4/5. Catalyzes the NAD(P)-dependent oxidation of 4-(phosphooxy)-L-threonine (HTP) into 2-amino-3-oxo-4-(phosphooxy)butyric acid which spontaneously decarboxylates to form 3-amino-2-oxopropyl phosphate (AHAP). The chain is 4-hydroxythreonine-4-phosphate dehydrogenase from Stenotrophomonas maltophilia (strain R551-3).